A 336-amino-acid chain; its full sequence is Gibberellin 2-beta-dioxygenase 7 (336 aa).

Positions 191–291 constitute a Fe2OG dioxygenase domain; that stretch reads LENSFLRLNK…RMSIAFFVCP (101 aa). Residues His-216, Asp-218, and His-272 each coordinate Fe cation. Arg-282 is a catalytic residue. 2-oxoglutarate is bound at residue Arg-282.

The protein belongs to the iron/ascorbate-dependent oxidoreductase family. GA2OX subfamily. It depends on Fe(2+) as a cofactor.

The catalysed reaction is gibberellin A1 + 2-oxoglutarate + O2 = gibberellin A8 + succinate + CO2. Its pathway is plant hormone biosynthesis; gibberellin biosynthesis. Its function is as follows. Catalyzes the 2-beta-hydroxylation of gibberellins (GA) precursors, rendering them unable to be converted to active GAs. Hydroxylates the C20-GA GA12 and GA53, but is not active on C19-GAs, like GA1, GA4, GA9 and GA20. The chain is Gibberellin 2-beta-dioxygenase 7 (GA2OX7) from Arabidopsis thaliana (Mouse-ear cress).